Here is a 404-residue protein sequence, read N- to C-terminus: Caspase-1 (404 aa).

In terms of domain architecture, CARD spans 1 to 91; that stretch reads MADKVLKEKR…YLAGTLGLSA (91 aa). Residues 1–119 constitute a propeptide that is removed on maturation; sequence MADKVLKEKR…SFPAPQAVQD (119 aa). Residue Lys-134 forms a Glycyl lysine isopeptide (Lys-Gly) (interchain with G-Cter in ubiquitin) linkage. Catalysis depends on residues His-237 and Cys-285. Residues 298–316 constitute a propeptide, interdomain linker; it reads SVGVSGNLSLPTTEEFEDD. Residue Ser-302 is modified to Phosphoserine.

The protein belongs to the peptidase C14A family. In terms of assembly, heterotetramer that consists of two anti-parallel arranged heterodimers, each one formed by a 20 kDa (Caspase-1 subunit p20) and a 10 kDa (Caspase-1 subunit p10) subunit. May be a component of the inflammasome, a protein complex which also includes PYCARD, CARD8 and NLRP2 and whose function would be the activation of pro-inflammatory caspases. Component of the AIM2 PANoptosome complex, a multiprotein complex that drives inflammatory cell death (PANoptosis). Interacts with CARD8; interacts with the released C-terminus of CARD8 which forms an inflammasome and directly activates CASP1 to promote pyroptosis. Both the p10 and p20 subunits interact with MEFV. Interacts with CARD17P/INCA and CARD18. Interacts with SERPINB1; this interaction regulates CASP1 activity. Heterotetramer that consists of two anti-parallel arranged heterodimers, each one formed by a 20 kDa (Caspase-1 subunit p20) and a 10 kDa (Caspase-1 subunit p10) subunit. Can form a heterodimer with isoform epsilon which then has an inhibitory effect. As to quaternary structure, heterotetramer that consists of two anti-parallel arranged heterodimers, each one formed by a 20 kDa (Caspase-1 subunit p20) and a 10 kDa (Caspase-1 subunit p10) subunit. In terms of assembly, can form a heterodimer with Caspase-1 subunit p20 which then has an inhibitory effect. Post-translationally, the two subunits are derived from the precursor sequence by an autocatalytic mechanism. Ubiquitinated via 'Lys-11'-linked polyubiquitination. Deubiquitinated by USP8. In terms of processing, cleavage in the interdomain linker region is required to induce pyroptosis. Expressed in larger amounts in spleen and lung. Detected in liver, heart, small intestine, colon, thymus, prostate, skeletal muscle, peripheral blood leukocytes, kidney and testis. No expression in the brain.

The protein localises to the cytoplasm. It is found in the cell membrane. The enzyme catalyses Strict requirement for an Asp residue at position P1 and has a preferred cleavage sequence of Tyr-Val-Ala-Asp-|-.. (Microbial infection) Specifically inhibited by the cowpox virus Crma protein. Thiol protease involved in a variety of inflammatory processes by proteolytically cleaving other proteins, such as the precursors of the inflammatory cytokines interleukin-1 beta (IL1B) and interleukin 18 (IL18) as well as the pyroptosis inducer Gasdermin-D (GSDMD), into active mature peptides. Plays a key role in cell immunity as an inflammatory response initiator: once activated through formation of an inflammasome complex, it initiates a pro-inflammatory response through the cleavage of the two inflammatory cytokines IL1B and IL18, releasing the mature cytokines which are involved in a variety of inflammatory processes. Cleaves a tetrapeptide after an Asp residue at position P1. Also initiates pyroptosis, a programmed lytic cell death pathway, through cleavage of GSDMD. In contrast to cleavage of interleukin IL1B, recognition and cleavage of GSDMD is not strictly dependent on the consensus cleavage site but depends on an exosite interface on CASP1 that recognizes and binds the Gasdermin-D, C-terminal (GSDMD-CT) part. Cleaves and activates CASP7 in response to bacterial infection, promoting plasma membrane repair. Upon inflammasome activation, during DNA virus infection but not RNA virus challenge, controls antiviral immunity through the cleavage of CGAS, rendering it inactive. In apoptotic cells, cleaves SPHK2 which is released from cells and remains enzymatically active extracellularly. Functionally, apoptosis inactive. This is Caspase-1 (CASP1) from Homo sapiens (Human).